The primary structure comprises 327 residues: L-lactate dehydrogenase (327 aa).

NAD(+) is bound by residues valine 18, aspartate 39, lysine 44, tyrosine 69, and 83 to 84; that span reads GA. Substrate-binding positions include glutamine 86, arginine 92, and 124-127; that span reads NPVD. Residues 122 to 124 and serine 147 contribute to the NAD(+) site; that span reads AAN. 152 to 155 provides a ligand contact to substrate; it reads DSAR. Beta-D-fructose 1,6-bisphosphate is bound by residues arginine 157 and histidine 172. The Proton acceptor role is filled by histidine 179. Position 224 is a phosphotyrosine (tyrosine 224). Threonine 233 is a substrate binding site.

The protein belongs to the LDH/MDH superfamily. LDH family. As to quaternary structure, homotetramer.

Its subcellular location is the cytoplasm. The catalysed reaction is (S)-lactate + NAD(+) = pyruvate + NADH + H(+). Its pathway is fermentation; pyruvate fermentation to lactate; (S)-lactate from pyruvate: step 1/1. With respect to regulation, allosterically activated by fructose 1,6-bisphosphate (FBP). Catalyzes the conversion of lactate to pyruvate. The polypeptide is L-lactate dehydrogenase (Streptococcus equi subsp. equi (strain 4047)).